The following is a 199-amino-acid chain: Desiccation stress protein DSP-22, chloroplastic (199 aa).

The N-terminal 52 residues, 1–52, are a transit peptide targeting the chloroplast; that stretch reads MASSTCYATIPAMSCRGQSTITRFGPNNLFLGKQSYELPLMRRNAKFTVRSM. A compositionally biased stretch (basic and acidic residues) spans 53-62; that stretch reads REDNEKEEQQ. The disordered stretch occupies residues 53-82; sequence REDNEKEEQQQQKQQQTHDGGPDLTPNRTE. 2 consecutive transmembrane segments (helical) span residues 130–152 and 172–191; these read FNGG…LIPI and IWNG…TEYV.

The protein belongs to the ELIP/psbS family. Preferentially localized in the chloroplast-rich palisade parenchyma cells, in extracts of desiccated leaves, in seeds, but not in roots or untreated leaves.

It is found in the plastid. Its subcellular location is the chloroplast thylakoid membrane. Possibly exerts a protective role during water loss. The protein is Desiccation stress protein DSP-22, chloroplastic (DSP-22) of Craterostigma plantagineum (Blue gem).